A 365-amino-acid chain; its full sequence is Methylthioribose-1-phosphate isomerase (365 aa).

Residue Asp249 is the Proton donor of the active site.

Belongs to the eIF-2B alpha/beta/delta subunits family. MtnA subfamily.

The protein resides in the cytoplasm. Its subcellular location is the nucleus. It carries out the reaction 5-(methylsulfanyl)-alpha-D-ribose 1-phosphate = 5-(methylsulfanyl)-D-ribulose 1-phosphate. The protein operates within amino-acid biosynthesis; L-methionine biosynthesis via salvage pathway; L-methionine from S-methyl-5-thio-alpha-D-ribose 1-phosphate: step 1/6. Its function is as follows. Catalyzes the interconversion of methylthioribose-1-phosphate (MTR-1-P) into methylthioribulose-1-phosphate (MTRu-1-P). The sequence is that of Methylthioribose-1-phosphate isomerase from Ostreococcus lucimarinus (strain CCE9901).